The following is a 252-amino-acid chain: Imidazole glycerol phosphate synthase subunit HisF (252 aa).

Catalysis depends on residues aspartate 11 and aspartate 130.

Belongs to the HisA/HisF family. In terms of assembly, heterodimer of HisH and HisF.

The protein resides in the cytoplasm. The enzyme catalyses 5-[(5-phospho-1-deoxy-D-ribulos-1-ylimino)methylamino]-1-(5-phospho-beta-D-ribosyl)imidazole-4-carboxamide + L-glutamine = D-erythro-1-(imidazol-4-yl)glycerol 3-phosphate + 5-amino-1-(5-phospho-beta-D-ribosyl)imidazole-4-carboxamide + L-glutamate + H(+). Its pathway is amino-acid biosynthesis; L-histidine biosynthesis; L-histidine from 5-phospho-alpha-D-ribose 1-diphosphate: step 5/9. Functionally, IGPS catalyzes the conversion of PRFAR and glutamine to IGP, AICAR and glutamate. The HisF subunit catalyzes the cyclization activity that produces IGP and AICAR from PRFAR using the ammonia provided by the HisH subunit. The sequence is that of Imidazole glycerol phosphate synthase subunit HisF from Bacillus pumilus (strain SAFR-032).